The primary structure comprises 801 residues: Ribosome biogenesis protein ERB1 (801 aa).

2 disordered regions span residues 1–135 (MGSK…LEDR) and 358–377 (PEYL…DPED). A compositionally biased stretch (acidic residues) spans 35–90 (SEDEEDYIPSSEVDEDDDDDADESASEDSDDSNDSEDDEVEEDDEALLSDEIPSEG). Composition is skewed to basic and acidic residues over residues 91–113 (ESEK…KEPS), 124–135 (PPRKEDEELEDR), and 362–377 (PTKE…DPED). 2 WD repeats span residues 451 to 490 (GHEG…QVWS) and 494 to 534 (NGDE…VTPA). The disordered stretch occupies residues 546–570 (GFGHATNGKQQANLPPGKEPPGKWA). 5 WD repeats span residues 586-628 (TVRS…TQIP), 631-669 (KLNG…LVKI), 672-711 (PGAK…RPYK), 715-755 (FHTE…DQLE), and 771-801 (VNKL…RLWM).

The protein belongs to the WD repeat BOP1/ERB1 family. Component of the NOP7 complex, composed of ERB1, NOP7 and YTM1. The complex is held together by ERB1, which interacts with NOP7 via its N-terminal domain and with YTM1 via a high-affinity interaction between the seven-bladed beta-propeller domains of the 2 proteins. The NOP7 complex associates with the 66S pre-ribosome.

It localises to the nucleus. It is found in the nucleolus. The protein localises to the nucleoplasm. Functionally, component of the NOP7 complex, which is required for maturation of the 25S and 5.8S ribosomal RNAs and formation of the 60S ribosome. This Chaetomium thermophilum (strain DSM 1495 / CBS 144.50 / IMI 039719) (Thermochaetoides thermophila) protein is Ribosome biogenesis protein ERB1.